A 360-amino-acid chain; its full sequence is Histidinol-phosphate aminotransferase (360 aa).

Lys222 carries the N6-(pyridoxal phosphate)lysine modification.

Belongs to the class-II pyridoxal-phosphate-dependent aminotransferase family. Histidinol-phosphate aminotransferase subfamily. Homodimer. Requires pyridoxal 5'-phosphate as cofactor.

The catalysed reaction is L-histidinol phosphate + 2-oxoglutarate = 3-(imidazol-4-yl)-2-oxopropyl phosphate + L-glutamate. The protein operates within amino-acid biosynthesis; L-histidine biosynthesis; L-histidine from 5-phospho-alpha-D-ribose 1-diphosphate: step 7/9. The sequence is that of Histidinol-phosphate aminotransferase from Listeria monocytogenes serotype 4b (strain F2365).